The sequence spans 467 residues: Argininosuccinate lyase (467 aa).

The protein belongs to the lyase 1 family. Argininosuccinate lyase subfamily.

The protein localises to the cytoplasm. It catalyses the reaction 2-(N(omega)-L-arginino)succinate = fumarate + L-arginine. It functions in the pathway amino-acid biosynthesis; L-arginine biosynthesis; L-arginine from L-ornithine and carbamoyl phosphate: step 3/3. This is Argininosuccinate lyase from Allorhizobium ampelinum (strain ATCC BAA-846 / DSM 112012 / S4) (Agrobacterium vitis (strain S4)).